The sequence spans 233 residues: Orotidine 5'-phosphate decarboxylase (233 aa).

Substrate is bound by residues D10, K32, 59–68 (DLKFHDIPNT), T119, R180, Q189, G209, and R210. K61 (proton donor) is an active-site residue.

This sequence belongs to the OMP decarboxylase family. Type 1 subfamily. As to quaternary structure, homodimer.

It catalyses the reaction orotidine 5'-phosphate + H(+) = UMP + CO2. It functions in the pathway pyrimidine metabolism; UMP biosynthesis via de novo pathway; UMP from orotate: step 2/2. Functionally, catalyzes the decarboxylation of orotidine 5'-monophosphate (OMP) to uridine 5'-monophosphate (UMP). This Pasteurella multocida (strain Pm70) protein is Orotidine 5'-phosphate decarboxylase.